The sequence spans 340 residues: C5a anaphylatoxin chemotactic receptor 1 (340 aa).

At 1–30 (TPDYGHYDDKDTLDANTPVDKTSNTLRVPD) the chain is on the extracellular side. A required for CHIPS binding region spans residues 3–11 (DYGHYDDKD). Residues tyrosine 4 and tyrosine 7 each carry the sulfotyrosine modification. Positions 14–23 (DANTPVDKTS) are involved in C5a binding. A helical transmembrane segment spans residues 31–57 (ILALVIFAVVFLVGVLRNALVVWVTAF). Topologically, residues 58–62 (EAKRT) are cytoplasmic. A helical transmembrane segment spans residues 63 to 86 (INAIWFLNLAVADFLSCLALPILF). Residues 87–103 (TSIVQHHHWPFGGAACR) lie on the Extracellular side of the membrane. An intrachain disulfide couples cysteine 102 to cysteine 181. Residues 104–125 (ILPSLILLNMYASILLLATISA) traverse the membrane as a helical segment. The Cytoplasmic segment spans residues 126–146 (DRFLLVFNPIWCQNFRGAGLA). A helical transmembrane segment spans residues 147–167 (WIACAVAWGLALLLTIPSFLY). The Extracellular portion of the chain corresponds to 168–193 (RVVREEYFPPKVLCGVDHGHDKRRER). The chain crosses the membrane as a helical span at residues 194–219 (AVAIARLVLGFVWPLLTLTMCYTFLL). Residues 220–235 (LRTWSRRATRSTKTLK) are Cytoplasmic-facing. The helical transmembrane segment at 236–258 (VVVAVVASFFIFWLPYQVTGMMM) threads the bilayer. The Extracellular portion of the chain corresponds to 259–275 (SFLEPSSPTFLLLKKLD). A helical transmembrane segment spans residues 276-296 (SLCISFAYINCCINPIIYVVA). The Cytoplasmic segment spans residues 297–340 (GQGFQGRLRKSLPSLLRNVLTEESMVRESKSFTRSTVDTMAQKT). Residues serine 307, serine 310, serine 320, serine 325, serine 327, and serine 331 each carry the phosphoserine modification.

The protein belongs to the G-protein coupled receptor 1 family. Homodimer. May also form higher-order oligomers. Interacts (when phosphorylated) with ARRB1 and ARRB2; the interaction is associated with internalization of C5aR. Interacts (via N-terminal domain) with S.aureus chemotaxis inhibitory protein (CHIPS); the interaction blocks the receptor and may thus inhibit the immune response. In terms of processing, sulfation plays a critical role in the association of C5aR with C5a, but no significant role in the ability of the receptor to transduce a signal and mobilize calcium in response to a small peptide agonist. Sulfation at Tyr-7 is important for CHIPS binding. Phosphorylated on serine residues in response to C5a binding, resulting in internalization of the receptor and short-term desensitization to C5a.

It localises to the cell membrane. The protein resides in the cytoplasmic vesicle. Receptor for the chemotactic and inflammatory peptide anaphylatoxin C5a. The ligand interacts with at least two sites on the receptor: a high-affinity site on the extracellular N-terminus, and a second site in the transmembrane region which activates downstream signaling events. Receptor activation stimulates chemotaxis, granule enzyme release, intracellular calcium release and superoxide anion production. This chain is C5a anaphylatoxin chemotactic receptor 1 (C5AR1), found in Macaca mulatta (Rhesus macaque).